The sequence spans 600 residues: Adenine deaminase 2 (600 aa).

This sequence belongs to the metallo-dependent hydrolases superfamily. Adenine deaminase family. Mn(2+) is required as a cofactor.

It catalyses the reaction adenine + H2O + H(+) = hypoxanthine + NH4(+). The sequence is that of Adenine deaminase 2 from Bradyrhizobium sp. (strain ORS 278).